A 237-amino-acid chain; its full sequence is N-(5'-phosphoribosyl)anthranilate isomerase (237 aa).

It belongs to the TrpF family.

The enzyme catalyses N-(5-phospho-beta-D-ribosyl)anthranilate = 1-(2-carboxyphenylamino)-1-deoxy-D-ribulose 5-phosphate. It participates in amino-acid biosynthesis; L-tryptophan biosynthesis; L-tryptophan from chorismate: step 3/5. The protein is N-(5'-phosphoribosyl)anthranilate isomerase of Desulfitobacterium hafniense (strain Y51).